A 427-amino-acid polypeptide reads, in one-letter code: Arginine biosynthesis bifunctional protein ArgJ (427 aa).

Thr-174, Lys-200, Thr-211, Glu-291, Asn-422, and Thr-427 together coordinate substrate. The Nucleophile role is filled by Thr-211.

Belongs to the ArgJ family. As to quaternary structure, heterotetramer of two alpha and two beta chains.

The protein resides in the cytoplasm. It carries out the reaction N(2)-acetyl-L-ornithine + L-glutamate = N-acetyl-L-glutamate + L-ornithine. It catalyses the reaction L-glutamate + acetyl-CoA = N-acetyl-L-glutamate + CoA + H(+). Its pathway is amino-acid biosynthesis; L-arginine biosynthesis; L-ornithine and N-acetyl-L-glutamate from L-glutamate and N(2)-acetyl-L-ornithine (cyclic): step 1/1. It functions in the pathway amino-acid biosynthesis; L-arginine biosynthesis; N(2)-acetyl-L-ornithine from L-glutamate: step 1/4. Functionally, catalyzes two activities which are involved in the cyclic version of arginine biosynthesis: the synthesis of N-acetylglutamate from glutamate and acetyl-CoA as the acetyl donor, and of ornithine by transacetylation between N(2)-acetylornithine and glutamate. This Prochlorococcus marinus (strain MIT 9313) protein is Arginine biosynthesis bifunctional protein ArgJ.